Here is an 820-residue protein sequence, read N- to C-terminus: Disintegrin and metalloproteinase domain-containing protein 29 (820 aa).

The signal sequence occupies residues 1–18 (MKMLLLLHCLGVFLSCSG). Positions 19 to 193 (HIQDEHPQYH…TQKQSSYVGW (175 aa)) are excised as a propeptide. At 194–674 (WIHFRIVEIV…GPPPKRKKKK (481 aa)) the chain is on the extracellular side. Positions 198 to 390 (RIVEIVVVID…RTKCLLETVH (193 aa)) constitute a Peptidase M12B domain. N-linked (GlcNAc...) asparagine glycans are attached at residues N217 and N320. 3 disulfides stabilise this stretch: C307-C384, C347-C369, and C349-C354. 7 N-linked (GlcNAc...) asparagine glycosylation sites follow: N368, N428, N469, N538, N545, N558, and N564. Residues 397 to 483 (VKRCGNGVVE…KCPDDFYVED (87 aa)) enclose the Disintegrin domain. A disulfide bond links C455 and C475. 3 disulfides stabilise this stretch: C625/C636, C630/C642, and C644/C653. The region spanning 625–654 (CSPAFCNKRGICNNKHHCHCNYLWDPPNCL) is the EGF-like domain. The helical transmembrane segment at 675–695 (KFCYLCILLLIVLFILLCCLY) threads the bilayer. Residues 696–820 (RLCKKSKPIK…SQSQPPVTPS (125 aa)) are Cytoplasmic-facing. The interval 706 to 820 (KQQDVQTPSA…SQSQPPVTPS (115 aa)) is disordered. A compositionally biased stretch (basic and acidic residues) spans 715–727 (AKEEEKIQRRPHE). Low complexity predominate over residues 738 to 820 (PSQSQPPVTP…SQSQPPVTPS (83 aa)). A run of 9 repeats spans residues 739–747 (SQSQPPVTP), 748–756 (SQSHPQVMP), 757–765 (SQSQPPVTP), 766–774 (SQSQPRVMP), 775–783 (SQSQPPVMP), 784–792 (SQSHPQLTP), 793–801 (SQSQPPVTP), 802–810 (SQRQPQLMP), and 811–819 (SQSQPPVTP). The tract at residues 739–819 (SQSQPPVTPS…PSQSQPPVTP (81 aa)) is 9 X 9 AA approximate repeats.

As to expression, expressed specifically in testes.

It is found in the membrane. Its function is as follows. May be involved in spermatogenesis and fertilization. Seems to be a non catalytic metalloprotease-like protein. This is Disintegrin and metalloproteinase domain-containing protein 29 (ADAM29) from Homo sapiens (Human).